The primary structure comprises 157 residues: Ribosomal RNA large subunit methyltransferase H (157 aa).

S-adenosyl-L-methionine contacts are provided by residues Leu73, Gly104, and 123–128; that span reads LGPLTL.

This sequence belongs to the RNA methyltransferase RlmH family. In terms of assembly, homodimer.

Its subcellular location is the cytoplasm. It carries out the reaction pseudouridine(1915) in 23S rRNA + S-adenosyl-L-methionine = N(3)-methylpseudouridine(1915) in 23S rRNA + S-adenosyl-L-homocysteine + H(+). Specifically methylates the pseudouridine at position 1915 (m3Psi1915) in 23S rRNA. The polypeptide is Ribosomal RNA large subunit methyltransferase H (Xylella fastidiosa (strain M12)).